A 311-amino-acid chain; its full sequence is Olfactory receptor 5AN1 (311 aa).

Residues 1–26 (MTGGGNITEITYFILLGFSDFPRIIK) lie on the Extracellular side of the membrane. Asn-6 carries N-linked (GlcNAc...) asparagine glycosylation. The helical transmembrane segment at 27-47 (VLFTIFLVIYITSLAWNLSLI) threads the bilayer. Topologically, residues 48–55 (VLIRMDSH) are cytoplasmic. A helical membrane pass occupies residues 56–76 (LHTPMYFFLSNLSFIDVCYIS). The Extracellular segment spans residues 77-100 (STVPKMLSNLLQEQQTITFVGCII). Cys-98 and Cys-190 are disulfide-bonded. The chain crosses the membrane as a helical span at residues 101–121 (QYFIFSTMGLSESCLMTAMAY). Residues 122 to 134 (DRYAAICNPLLYS) lie on the Cytoplasmic side of the membrane. Residues 135-155 (SIMSPTLCVWMVLGAYMTGLT) traverse the membrane as a helical segment. The Extracellular segment spans residues 156 to 197 (ASLFQIGALLQLHFCGSNVIRHFFCDMPQLLILSCTDTFFVQ). The helical transmembrane segment at 198–218 (VMTAILTMFFGIASALVIMIS) threads the bilayer. Residues 219–238 (YGYIGISIMKITSAKGRSKA) lie on the Cytoplasmic side of the membrane. Residues 239–259 (FNTCASHLTAVSLFYTSGIFV) form a helical membrane-spanning segment. The Extracellular portion of the chain corresponds to 260–272 (YLSSSSGGSSSFD). Residues 273-293 (RFASVFYTVVIPMLNPLIYSL) form a helical membrane-spanning segment. The Cytoplasmic portion of the chain corresponds to 294–311 (RNKEIKDALKRLQKRKCC).

It belongs to the G-protein coupled receptor 1 family.

It localises to the cell membrane. Its function is as follows. Odorant receptor for musk, which specifically recognizes muscone, musk xylol, and musk ketone. Ligand-binding causes a conformation change that triggers signaling via G(s)-class of G alpha protein GNAL, activating adenylyl cyclase. The protein is Olfactory receptor 5AN1 of Homo sapiens (Human).